Reading from the N-terminus, the 518-residue chain is Ribonuclease Y (518 aa).

The chain crosses the membrane as a helical span at residues Val-2 to Ile-22. Residues Gln-91–Ala-119 form a disordered region. The 61-residue stretch at Thr-208–Leu-268 folds into the KH domain. An HD domain is found at Val-334–Ala-427.

This sequence belongs to the RNase Y family.

Its subcellular location is the cell membrane. Its function is as follows. Endoribonuclease that initiates mRNA decay. This is Ribonuclease Y from Enterococcus faecalis (strain ATCC 700802 / V583).